Here is a 1361-residue protein sequence, read N- to C-terminus: DNA-directed RNA polymerase subunit beta (1361 aa).

The protein belongs to the RNA polymerase beta chain family. The RNAP catalytic core consists of 2 alpha, 1 beta, 1 beta' and 1 omega subunit. When a sigma factor is associated with the core the holoenzyme is formed, which can initiate transcription.

The catalysed reaction is RNA(n) + a ribonucleoside 5'-triphosphate = RNA(n+1) + diphosphate. DNA-dependent RNA polymerase catalyzes the transcription of DNA into RNA using the four ribonucleoside triphosphates as substrates. The polypeptide is DNA-directed RNA polymerase subunit beta (Dichelobacter nodosus (strain VCS1703A)).